The following is a 66-amino-acid chain: DNA-binding protein 7d (66 aa).

Residues K5 and K7 each carry the N6-methyllysine; partial modification.

It belongs to the 7 kDa DNA-binding/endoribonuclease P2 family. Monomer. Lys-5 was 70% monomethylated in form 7a, 25% in form 7b, and 20% in form 7d. Lys-7 was 50% monomethylated in form 7a, 40% in form 7b, and 50% in form 7d.

The protein resides in the cytoplasm. In terms of biological role, can constrain negative DNA supercoils. May be involved in maintaining the integrity of the genome at high temperature. In Sulfolobus acidocaldarius (strain ATCC 33909 / DSM 639 / JCM 8929 / NBRC 15157 / NCIMB 11770), this protein is DNA-binding protein 7d.